Reading from the N-terminus, the 613-residue chain is Zinc metalloproteinase-disintegrin-like EoVMP2 (613 aa).

Positions 1 to 20 (MMQVLLVTICLAVFPYQGSS) are cleaved as a signal peptide. Positions 21 to 194 (IILESGNVND…EASQLFATSE (174 aa)) are excised as a propeptide. Gln195 bears the Pyrrolidone carboxylic acid mark. The Peptidase M12B domain occupies 201 to 397 (RYIEFFIVVD…RNPKCMINKP (197 aa)). Glu204 is a Ca(2+) binding site. A glycan (N-linked (GlcNAc...) asparagine) is linked at Asn219. A Ca(2+)-binding site is contributed by Asp288. Disulfide bonds link Cys312–Cys392, Cys352–Cys376, and Cys354–Cys359. His337 is a binding site for Zn(2+). Residue Glu338 is part of the active site. Residues His341 and His347 each coordinate Zn(2+). An N-linked (GlcNAc...) asparagine glycan is attached at Asn375. Ca(2+)-binding residues include Cys392, Asn395, Val407, Asn410, Leu412, Glu414, Glu417, and Asp420. A Disintegrin domain is found at 405 to 491 (PPVCGNGLLE…DCPIDGFHAN (87 aa)). 14 disulfides stabilise this stretch: Cys408–Cys437, Cys419–Cys432, Cys421–Cys427, Cys431–Cys454, Cys445–Cys451, Cys450–Cys476, Cys463–Cys483, Cys470–Cys502, Cys495–Cys507, Cys514–Cys564, Cys529–Cys575, Cys542–Cys552, Cys559–Cys601, and Cys595–Cys606. The D/ECD-tripeptide signature appears at 469 to 471 (DCD).

This sequence belongs to the venom metalloproteinase (M12B) family. P-III subfamily. P-IIIa sub-subfamily. As to quaternary structure, monomer. The cofactor is Zn(2+). As to expression, expressed by the venom gland.

Its subcellular location is the secreted. In terms of biological role, snake venom zinc metalloprotease that possesses high hemorrhagic activity. It inhibits collagen-induced platelet aggregation and activates prothrombin (F2). This is Zinc metalloproteinase-disintegrin-like EoVMP2 (Svmp3-Eoc22) from Echis ocellatus (Ocellated saw-scaled viper).